Here is a 312-residue protein sequence, read N- to C-terminus: Olfactory receptor 1D5 (312 aa).

Topologically, residues 1-25 (MDGDNQSENSQFLLLGISESPEQQQ) are extracellular. N-linked (GlcNAc...) asparagine glycosylation occurs at Asn5. Residues 26–49 (ILFWMFLSMYLVTVLGNVLIILAI) form a helical membrane-spanning segment. The Cytoplasmic portion of the chain corresponds to 50–57 (SSDSRLHT). Residues 58-79 (PMYFFLANLSFTDLFFVTNTIP) traverse the membrane as a helical segment. Over 80 to 100 (KMLVNLQSQNKAISYAGCLTQ) the chain is Extracellular. Cysteines 97 and 189 form a disulfide. Residues 101-120 (LYFLVSLVTLDNLILAVMAY) form a helical membrane-spanning segment. Topologically, residues 121–140 (DRYVAICCPLHYVTAMSPGL) are cytoplasmic. The chain crosses the membrane as a helical span at residues 141-158 (CVLLLSLCWGLSVFYGLL). Over 159–196 (LTLLLTRVTFCGPREIHYLFCDMYILLRLACSNTHIIH) the chain is Extracellular. Residues 197 to 220 (TVLVATGCFIFLTPLGFMTTSYVR) form a helical membrane-spanning segment. Topologically, residues 221–237 (IVRTILQIPSASKKYKA) are cytoplasmic. The helical transmembrane segment at 238–260 (FSTCASHLGVVSLFYGTLAMVYL) threads the bilayer. Residues 261–271 (QPLHTYSMKDS) are Extracellular-facing. Residues 272–291 (VATVMYAVVTPMMNPFIHSL) form a helical membrane-spanning segment. Residues 292–312 (RNKDMHGALGRVLRRLFQRPK) lie on the Cytoplasmic side of the membrane.

This sequence belongs to the G-protein coupled receptor 1 family.

The protein resides in the cell membrane. Odorant receptor. The chain is Olfactory receptor 1D5 (OR1D5) from Pan troglodytes (Chimpanzee).